A 50-amino-acid polypeptide reads, in one-letter code: Tubulin alpha chain (50 aa).

GTP is bound at residue Asn-28. Glu-40 is a catalytic residue.

The protein belongs to the tubulin family. As to quaternary structure, dimer of alpha and beta chains. A typical microtubule is a hollow water-filled tube with an outer diameter of 25 nm and an inner diameter of 15 nM. Alpha-beta heterodimers associate head-to-tail to form protofilaments running lengthwise along the microtubule wall with the beta-tubulin subunit facing the microtubule plus end conferring a structural polarity. Microtubules usually have 13 protofilaments but different protofilament numbers can be found in some organisms and specialized cells. It depends on Mg(2+) as a cofactor.

Its subcellular location is the cytoplasm. It localises to the cytoskeleton. The enzyme catalyses GTP + H2O = GDP + phosphate + H(+). Its function is as follows. Tubulin is the major constituent of microtubules, a cylinder consisting of laterally associated linear protofilaments composed of alpha- and beta-tubulin heterodimers. Microtubules grow by the addition of GTP-tubulin dimers to the microtubule end, where a stabilizing cap forms. Below the cap, tubulin dimers are in GDP-bound state, owing to GTPase activity of alpha-tubulin. This is Tubulin alpha chain from Populus euphratica (Euphrates poplar).